The primary structure comprises 449 residues: tRNA-2-methylthio-N(6)-dimethylallyladenosine synthase (449 aa).

One can recognise an MTTase N-terminal domain in the interval 2–119 (KGLFIRTYGC…LPEMIARASR (118 aa)). Residues Cys11, Cys47, Cys82, Cys157, Cys161, and Cys164 each contribute to the [4Fe-4S] cluster site. The Radical SAM core domain occupies 143–378 (EADGPAAFVS…QALLREQQTE (236 aa)). The region spanning 381–443 (ASQIGKTLPV…LNSLTGELVR (63 aa)) is the TRAM domain.

The protein belongs to the methylthiotransferase family. MiaB subfamily. Monomer. It depends on [4Fe-4S] cluster as a cofactor.

It localises to the cytoplasm. It carries out the reaction N(6)-dimethylallyladenosine(37) in tRNA + (sulfur carrier)-SH + AH2 + 2 S-adenosyl-L-methionine = 2-methylsulfanyl-N(6)-dimethylallyladenosine(37) in tRNA + (sulfur carrier)-H + 5'-deoxyadenosine + L-methionine + A + S-adenosyl-L-homocysteine + 2 H(+). Its function is as follows. Catalyzes the methylthiolation of N6-(dimethylallyl)adenosine (i(6)A), leading to the formation of 2-methylthio-N6-(dimethylallyl)adenosine (ms(2)i(6)A) at position 37 in tRNAs that read codons beginning with uridine. The chain is tRNA-2-methylthio-N(6)-dimethylallyladenosine synthase from Hyphomonas neptunium (strain ATCC 15444).